The sequence spans 78 residues: Translational regulator CsrA (78 aa).

The protein belongs to the CsrA/RsmA family. As to quaternary structure, homodimer; the beta-strands of each monomer intercalate to form a hydrophobic core, while the alpha-helices form wings that extend away from the core.

Its subcellular location is the cytoplasm. In terms of biological role, a translational regulator that binds mRNA to regulate translation initiation and/or mRNA stability. Usually binds in the 5'-UTR at or near the Shine-Dalgarno sequence preventing ribosome-binding, thus repressing translation. Its main target seems to be the major flagellin gene, while its function is anatagonized by FliW. This is Translational regulator CsrA from Borrelia recurrentis (strain A1).